Reading from the N-terminus, the 444-residue chain is 23S rRNA (uracil(1939)-C(5))-methyltransferase RlmD (444 aa).

In terms of domain architecture, TRAM spans 5–67 (RNRLDRTPFQ…RHFDEAKTVE (63 aa)). The [4Fe-4S] cluster site is built by cysteine 80, cysteine 86, cysteine 89, and cysteine 168. S-adenosyl-L-methionine contacts are provided by glutamine 276, phenylalanine 305, asparagine 310, glutamate 326, aspartate 353, and aspartate 374. Cysteine 400 serves as the catalytic Nucleophile.

This sequence belongs to the class I-like SAM-binding methyltransferase superfamily. RNA M5U methyltransferase family. RlmD subfamily.

The catalysed reaction is uridine(1939) in 23S rRNA + S-adenosyl-L-methionine = 5-methyluridine(1939) in 23S rRNA + S-adenosyl-L-homocysteine + H(+). Catalyzes the formation of 5-methyl-uridine at position 1939 (m5U1939) in 23S rRNA. In Xanthomonas euvesicatoria pv. vesicatoria (strain 85-10) (Xanthomonas campestris pv. vesicatoria), this protein is 23S rRNA (uracil(1939)-C(5))-methyltransferase RlmD.